Reading from the N-terminus, the 550-residue chain is MIYPKIPLAQSIIEICNTKGLHHIVISPGSRNAPLTIGFTNNPVFTCYSIADERCAAFFALGIAQQLKKPVALVCTSGSALLNYYPAFAEAFYSQIPLVVISADRPQSKIDIGDGQTIRQENVFANHSLYNANLVENVSEENDAKIQEAIHLATTKKGPVHINVPFEEPLYETVDTISVNTKIIDFDTENKPLENLDVFVNRWNDAKKKLILIGGCDPNVIQQFIIDFLANDTSVVVMTEVTSNVHHANFITNIDAIITPFTDDDFTNFQPEILITMGGMIVSKRIKAFLRKYKPQQHWHIDELRAYDTFGSLTKHFEVLPSVFFKEFIPKINSLESNYLPYSLEIKKVRTQKTNTYLATIPFSDFKAFEIILPKLPLYSQLQISNSSAIRYAQLFSIHSSIEVFCNRGTSGIDGSTSTAIGAAIASGKETILITGDISFLYDSNALWNNYIPENFKIILLNNGGGGIFRILPGHKENETFNTYFETSHRLTAKYLAKMYNFGYEKAVDEKTLAEKLKITINTKKSIILEVFTPTKVNDLVLLNYFKNLT.

This sequence belongs to the TPP enzyme family. MenD subfamily. In terms of assembly, homodimer. The cofactor is Mg(2+). It depends on Mn(2+) as a cofactor. Thiamine diphosphate is required as a cofactor.

The enzyme catalyses isochorismate + 2-oxoglutarate + H(+) = 5-enolpyruvoyl-6-hydroxy-2-succinyl-cyclohex-3-ene-1-carboxylate + CO2. It functions in the pathway quinol/quinone metabolism; 1,4-dihydroxy-2-naphthoate biosynthesis; 1,4-dihydroxy-2-naphthoate from chorismate: step 2/7. It participates in quinol/quinone metabolism; menaquinone biosynthesis. Its function is as follows. Catalyzes the thiamine diphosphate-dependent decarboxylation of 2-oxoglutarate and the subsequent addition of the resulting succinic semialdehyde-thiamine pyrophosphate anion to isochorismate to yield 2-succinyl-5-enolpyruvyl-6-hydroxy-3-cyclohexene-1-carboxylate (SEPHCHC). The polypeptide is 2-succinyl-5-enolpyruvyl-6-hydroxy-3-cyclohexene-1-carboxylate synthase (Flavobacterium psychrophilum (strain ATCC 49511 / DSM 21280 / CIP 103535 / JIP02/86)).